A 440-amino-acid chain; its full sequence is Thymidine phosphorylase (440 aa).

This sequence belongs to the thymidine/pyrimidine-nucleoside phosphorylase family. Homodimer.

It carries out the reaction thymidine + phosphate = 2-deoxy-alpha-D-ribose 1-phosphate + thymine. It participates in pyrimidine metabolism; dTMP biosynthesis via salvage pathway; dTMP from thymine: step 1/2. Functionally, the enzymes which catalyze the reversible phosphorolysis of pyrimidine nucleosides are involved in the degradation of these compounds and in their utilization as carbon and energy sources, or in the rescue of pyrimidine bases for nucleotide synthesis. This is Thymidine phosphorylase from Klebsiella pneumoniae (strain 342).